A 430-amino-acid chain; its full sequence is Agropine synthesis reductase (430 aa).

Residue 203-227 (LISGPSRGIGKAIAENLIAHGYRMS) participates in NAD(+) binding. Position 333 (S333) interacts with substrate. The active-site Proton acceptor is the Y346.

Belongs to the short-chain dehydrogenases/reductases (SDR) family.

Its pathway is opine metabolism; mannopine biosynthesis. In terms of biological role, reduces deoxy-fructosyl-glutamine to mannopine. In Rhizobium rhizogenes (Agrobacterium rhizogenes), this protein is Agropine synthesis reductase (mas1).